The primary structure comprises 603 residues: Probable potassium transport system protein Kup (603 aa).

The next 12 membrane-spanning stretches (helical) occupy residues 15–35 (GLVF…IFLL), 43–63 (VIGV…VEYA), 94–114 (AAFI…DGVI), 136–156 (IGQG…FSVQ), 163–183 (ITWV…FSGI), 201–221 (AISF…EVIL), 244–264 (AWRL…AFII), 284–304 (IYIP…QAMI), 336–356 (IYIG…IFEF), 367–387 (GLAV…IFYL), 391–411 (MFRS…LLSN), and 415–435 (IPHG…LIII).

This sequence belongs to the HAK/KUP transporter (TC 2.A.72) family.

The protein resides in the cell membrane. It catalyses the reaction K(+)(in) + H(+)(in) = K(+)(out) + H(+)(out). Transport of potassium into the cell. Likely operates as a K(+):H(+) symporter. The protein is Probable potassium transport system protein Kup of Methanosarcina acetivorans (strain ATCC 35395 / DSM 2834 / JCM 12185 / C2A).